We begin with the raw amino-acid sequence, 85 residues long: U1-theraphotoxin-Hs1a (85 aa).

Residues 1-22 (MKVTLIAILTCAAVLVLHTTAA) form the signal peptide. A propeptide spanning residues 23-48 (EELEAESQLMEVGMPDTELAAVDEER) is cleaved from the precursor. 3 cysteine pairs are disulfide-bonded: cysteine 52/cysteine 66, cysteine 56/cysteine 77, and cysteine 71/cysteine 82.

In terms of assembly, heterodimer composed of the two variants Ile-58 and Gln-58. Expressed by the venom gland.

Its subcellular location is the secreted. Its function is as follows. Lethal neurotoxin that blocks neuromuscular transmission. Acts cooperatively to potentiate the activity of huwentoxin-I. This toxin is active against insects. This chain is U1-theraphotoxin-Hs1a, found in Cyriopagopus schmidti (Chinese bird spider).